A 418-amino-acid polypeptide reads, in one-letter code: NADH-quinone oxidoreductase subunit D (418 aa).

Belongs to the complex I 49 kDa subunit family. NDH-1 is composed of 14 different subunits. Subunits NuoB, C, D, E, F, and G constitute the peripheral sector of the complex.

It is found in the cell inner membrane. The enzyme catalyses a quinone + NADH + 5 H(+)(in) = a quinol + NAD(+) + 4 H(+)(out). Its function is as follows. NDH-1 shuttles electrons from NADH, via FMN and iron-sulfur (Fe-S) centers, to quinones in the respiratory chain. The immediate electron acceptor for the enzyme in this species is believed to be ubiquinone. Couples the redox reaction to proton translocation (for every two electrons transferred, four hydrogen ions are translocated across the cytoplasmic membrane), and thus conserves the redox energy in a proton gradient. In Neisseria meningitidis serogroup C / serotype 2a (strain ATCC 700532 / DSM 15464 / FAM18), this protein is NADH-quinone oxidoreductase subunit D.